Consider the following 142-residue polypeptide: UPF0305 protein MK0666 (142 aa).

Belongs to the UPF0305 family.

In Methanopyrus kandleri (strain AV19 / DSM 6324 / JCM 9639 / NBRC 100938), this protein is UPF0305 protein MK0666.